The following is a 253-amino-acid chain: Protein phosphatase CheZ (253 aa).

The disordered stretch occupies residues Met1–Glu84. Over residues Leu21–Gly69 the composition is skewed to basic and acidic residues.

The protein belongs to the CheZ family. As to quaternary structure, interacts with ChePep; this interaction is essential for each other polar localization.

It is found in the cytoplasm. In terms of biological role, plays an important role in bacterial chemotaxis signal transduction pathway by accelerating the dephosphorylation of phosphorylated CheY (CheY-P). Also dephosphorylates CheV2 but not CheV1 or CheV3. In addition, forms a distinct chemotaxis regulatory complex with ChePep independently of the core chemotaxis signaling proteins. This chain is Protein phosphatase CheZ, found in Helicobacter pylori (strain ATCC 700392 / 26695) (Campylobacter pylori).